A 196-amino-acid chain; its full sequence is Alpha-crystallin A chain (196 aa).

Met1 bears the N-acetylmethionine mark. Residues 1–63 form a required for complex formation with BFSP1 and BFSP2 region; sequence MDVTIQHPWF…RTVLDSGISE (63 aa). Deamidated glutamine; partial is present on Gln6. Ser45 carries the phosphoserine modification. Gln50 carries the deamidated glutamine; partial modification. Residues 76–185 form the sHSP domain; that stretch reads HAGNPKNNPG…GHSERAIPVS (110 aa). 2 positions are modified to N6-acetyllysine: Lys93 and Lys122. His123 provides a ligand contact to Zn(2+). Asn124 is modified (deamidated asparagine; partial). Zn(2+) is bound by residues Glu125 and His130. Ser145 is modified (phosphoserine). Asn146 is subject to Deamidated asparagine; partial. Positions 168–196 are disordered; the sequence is KVQSGLDAGHSERAIPVSREEKPSSAPSS. Residue Gln170 is modified to Deamidated glutamine; partial. Positions 176-190 are enriched in basic and acidic residues; sequence GHSERAIPVSREEKP. His177 contributes to the Zn(2+) binding site. A glycan (O-linked (GlcNAc) serine) is linked at Ser185.

This sequence belongs to the small heat shock protein (HSP20) family. In terms of assembly, heteropolymer composed of three CRYAA and one CRYAB subunits. Inter-subunit bridging via zinc ions enhances stability, which is crucial as there is no protein turn over in the lens. Can also form homodimers and homotetramers (dimers of dimers) which serve as the building blocks of homooligomers. Within homooligomers, the zinc-binding motif is created from residues of 3 different molecules. His-123 and Glu-125 from one molecule are ligands of the zinc ion, and His-130 and His-177 residues from additional molecules complete the site with tetrahedral coordination geometry. Part of a complex required for lens intermediate filament formation composed of BFSP1, BFSP2 and CRYAA. Post-translationally, acetylation at Lys-93 may increase chaperone activity. Undergoes age-dependent proteolytical cleavage at the C-terminus. Cleavage by m-calpain produces specifically alpha-crystallin A(1-162), cleavage by Capn3/Lp82 produces specifically alpha-crystallin A(1-168) which is the major truncated form during normal maturation and induced cataract formation. In terms of tissue distribution, highly expressed in eye lens. Also expressed in non-lenticular tissues such as brain, spleen, liver, lung, skin, small intestine and a several epithelial and fibroblast cell lines with highest levels in spleen.

It localises to the cytoplasm. It is found in the nucleus. Contributes to the transparency and refractive index of the lens. Acts as a chaperone, preventing aggregation of various proteins under a wide range of stress conditions. Required for the correct formation of lens intermediate filaments as part of a complex composed of BFSP1, BFSP2 and CRYAA. In terms of biological role, inhibits bacterial growth in the lens. The chain is Alpha-crystallin A chain (Cryaa) from Rattus norvegicus (Rat).